Reading from the N-terminus, the 175-residue chain is ATP-dependent protease subunit HslV (175 aa).

Thr2 is a catalytic residue. Ala156, Cys159, and Thr162 together coordinate Na(+).

It belongs to the peptidase T1B family. HslV subfamily. A double ring-shaped homohexamer of HslV is capped on each side by a ring-shaped HslU homohexamer. The assembly of the HslU/HslV complex is dependent on binding of ATP.

The protein resides in the cytoplasm. It carries out the reaction ATP-dependent cleavage of peptide bonds with broad specificity.. Allosterically activated by HslU binding. Protease subunit of a proteasome-like degradation complex believed to be a general protein degrading machinery. This is ATP-dependent protease subunit HslV from Rhizobium rhizogenes (strain K84 / ATCC BAA-868) (Agrobacterium radiobacter).